The chain runs to 304 residues: E3 ubiquitin-protein ligase CCNB1IP1 homolog (304 aa).

An RING-type; degenerate zinc finger spans residues 3–42 (CNACWRDLEGRAISTTCGHLLCTEDASKILSNDGACPICD). Positions 124–184 (TAYQKMGKRC…YESVKRTAIQ (61 aa)) form a coiled coil. A disordered region spans residues 218–279 (SFFSPATPGP…GGGGTANPQS (62 aa)). Positions 235–250 (RQNSSNSGPFDISTDS) are enriched in polar residues.

Expressed mostly in flower buds and roots.

The protein resides in the nucleus. It localises to the chromosome. It carries out the reaction S-ubiquitinyl-[E2 ubiquitin-conjugating enzyme]-L-cysteine + [acceptor protein]-L-lysine = [E2 ubiquitin-conjugating enzyme]-L-cysteine + N(6)-ubiquitinyl-[acceptor protein]-L-lysine.. The protein operates within protein modification; protein ubiquitination. Functionally, ubiquitin E3 ligase required for class I crossover (CO) formation during meiosis. This Arabidopsis thaliana (Mouse-ear cress) protein is E3 ubiquitin-protein ligase CCNB1IP1 homolog (HEI10).